Consider the following 159-residue polypeptide: MNIDIISVGKVKEKYIKLGIAEFSKRLSAHCKLNIIEVDDLSAAENLSDSEKEIVKDKEAEKIISKIKDSHYVITLEIVGNQLTSEKLAAKIENLTIQGHSNICFVIGGSLGLGKSVLDRSDYALSFSKFTFPHQLMRLILLEQIYRSFRIINNLPYHK.

Residues Leu-76 and Gly-108 each contribute to the S-adenosyl-L-methionine site.

The protein belongs to the RNA methyltransferase RlmH family. Homodimer.

The protein localises to the cytoplasm. The catalysed reaction is pseudouridine(1915) in 23S rRNA + S-adenosyl-L-methionine = N(3)-methylpseudouridine(1915) in 23S rRNA + S-adenosyl-L-homocysteine + H(+). In terms of biological role, specifically methylates the pseudouridine at position 1915 (m3Psi1915) in 23S rRNA. The polypeptide is Ribosomal RNA large subunit methyltransferase H (Finegoldia magna (strain ATCC 29328 / DSM 20472 / WAL 2508) (Peptostreptococcus magnus)).